The sequence spans 544 residues: Chaperonin GroEL (544 aa).

Residues 29 to 32 (TLGP), Lys50, 86 to 90 (DGTTT), Gly414, 477 to 479 (DAA), and Asp493 each bind ATP.

The protein belongs to the chaperonin (HSP60) family. In terms of assembly, forms a cylinder of 14 subunits composed of two heptameric rings stacked back-to-back. Interacts with the co-chaperonin GroES.

Its subcellular location is the cytoplasm. It catalyses the reaction ATP + H2O + a folded polypeptide = ADP + phosphate + an unfolded polypeptide.. In terms of biological role, together with its co-chaperonin GroES, plays an essential role in assisting protein folding. The GroEL-GroES system forms a nano-cage that allows encapsulation of the non-native substrate proteins and provides a physical environment optimized to promote and accelerate protein folding. The protein is Chaperonin GroEL of Hydrogenovibrio crunogenus (strain DSM 25203 / XCL-2) (Thiomicrospira crunogena).